The following is a 74-amino-acid chain: Large ribosomal subunit protein bL31 (74 aa).

Positions 16, 18, 38, and 41 each coordinate Zn(2+).

The protein belongs to the bacterial ribosomal protein bL31 family. Type A subfamily. In terms of assembly, part of the 50S ribosomal subunit. It depends on Zn(2+) as a cofactor.

In terms of biological role, binds the 23S rRNA. The chain is Large ribosomal subunit protein bL31 from Salinispora arenicola (strain CNS-205).